Here is a 510-residue protein sequence, read N- to C-terminus: NAD(P)H-quinone oxidoreductase subunit 2 A, chloroplastic (510 aa).

The next 13 helical transmembrane spans lie at 31–51, 57–77, 99–119, 124–144, 149–169, 183–203, 229–249, 295–315, 323–343, 354–374, 395–415, 418–438, and 484–504; these read FIFP…IDLT, TPWL…ALLF, IFQF…VEYI, MAIT…MFLC, LITI…LSGY, YLLM…WLYG, ISIA…PAPF, WHLL…LIAI, MLAY…IVGD, YMLF…LFGL, ALSS…AGFF, LYLF…IGLL, and MIVC…IIAI.

The protein belongs to the complex I subunit 2 family. As to quaternary structure, NDH is composed of at least 16 different subunits, 5 of which are encoded in the nucleus.

Its subcellular location is the plastid. It is found in the chloroplast thylakoid membrane. It carries out the reaction a plastoquinone + NADH + (n+1) H(+)(in) = a plastoquinol + NAD(+) + n H(+)(out). The catalysed reaction is a plastoquinone + NADPH + (n+1) H(+)(in) = a plastoquinol + NADP(+) + n H(+)(out). In terms of biological role, NDH shuttles electrons from NAD(P)H:plastoquinone, via FMN and iron-sulfur (Fe-S) centers, to quinones in the photosynthetic chain and possibly in a chloroplast respiratory chain. The immediate electron acceptor for the enzyme in this species is believed to be plastoquinone. Couples the redox reaction to proton translocation, and thus conserves the redox energy in a proton gradient. In Nymphaea alba (White water-lily), this protein is NAD(P)H-quinone oxidoreductase subunit 2 A, chloroplastic.